The chain runs to 322 residues: ATP-dependent 6-phosphofructokinase (322 aa).

ATP-binding positions include glycine 12, 73-74, and 103-106; these read RF and GDGT. A Mg(2+)-binding site is contributed by aspartate 104. 126–128 provides a ligand contact to substrate; the sequence is TID. Catalysis depends on aspartate 128, which acts as the Proton acceptor. Arginine 155 is a binding site for ADP. Substrate contacts are provided by residues arginine 163 and 170-172; that span reads MGR. ADP contacts are provided by residues 186-188, lysine 212, and 214-216; these read GSE and KPS. Residues glutamate 223, arginine 245, and 251-254 contribute to the substrate site; that span reads HTQR.

Belongs to the phosphofructokinase type A (PFKA) family. ATP-dependent PFK group I subfamily. Prokaryotic clade 'B1' sub-subfamily. As to quaternary structure, homotetramer. It depends on Mg(2+) as a cofactor.

Its subcellular location is the cytoplasm. The catalysed reaction is beta-D-fructose 6-phosphate + ATP = beta-D-fructose 1,6-bisphosphate + ADP + H(+). The protein operates within carbohydrate degradation; glycolysis; D-glyceraldehyde 3-phosphate and glycerone phosphate from D-glucose: step 3/4. Its activity is regulated as follows. Allosterically activated by ADP and other diphosphonucleosides, and allosterically inhibited by phosphoenolpyruvate. Catalyzes the phosphorylation of D-fructose 6-phosphate to fructose 1,6-bisphosphate by ATP, the first committing step of glycolysis. The protein is ATP-dependent 6-phosphofructokinase of Mesomycoplasma hyopneumoniae (strain 7448) (Mycoplasma hyopneumoniae).